Here is a 242-residue protein sequence, read N- to C-terminus: Putative pyrimidine-specific ribonucleoside hydrolase RihB (242 aa).

2 residues coordinate substrate: Q156 and H168.

Belongs to the IUNH family. RihB subfamily.

It carries out the reaction a pyrimidine ribonucleoside + H2O = a pyrimidine nucleobase + D-ribose. The chain is Putative pyrimidine-specific ribonucleoside hydrolase RihB (rihB) from Shigella boydii serotype 4 (strain Sb227).